The chain runs to 644 residues: uncharacterized protein (644 aa).

The segment at 1–35 is disordered; the sequence is MKANGLDNDPARTGMERTDIDSEHPEAQPLLNNNH. At 1–90 the chain is on the cytoplasmic side; that stretch reads MKANGLDNDP…ILNILILINT (90 aa). Basic and acidic residues predominate over residues 14–26; sequence GMERTDIDSEHPE. Phosphoserine occurs at positions 22, 56, and 63. A helical transmembrane segment spans residues 91–111; sequence IWLVTTLISDFFFNINILFGF. Residues 112–122 are Vacuolar-facing; that stretch reads SNRYASFNDLT. The chain crosses the membrane as a helical span at residues 123 to 143; sequence LIFISIIANSFNLWFNKLGLY. Residues 144–147 lie on the Cytoplasmic side of the membrane; that stretch reads SALD. A helical membrane pass occupies residues 148–168; it reads YSLNVTLCVLTLFNLALTYLI. The Vacuolar portion of the chain corresponds to 169–174; the sequence is KYTRQR. The helical transmembrane segment at 175–195 threads the bilayer; it reads IGFVGTFTYLWTSFSFFIGAI. Topologically, residues 196 to 271 are cytoplasmic; it reads LDWYLLFYNN…EWVSIGFRNT (76 aa). A disordered region spans residues 225-251; it reads NENHTNSTENRDRSQYGSGSPTPTHRS. Residues 239–251 are compositionally biased toward polar residues; the sequence is QYGSGSPTPTHRS. Ser-244 is modified (phosphoserine). A helical membrane pass occupies residues 272–292; it reads IKFLILIFFALFTLNTLLTTL. Residues 293 to 644 are Vacuolar-facing; that stretch reads DTYRLTHKLP…IGELGKLTED (352 aa). The region spanning 348 to 619 is the AB hydrolase-1 domain; it reads PIILFEHGGY…IVEGGHEIYK (272 aa). The segment at 469–492 is disordered; it reads GRGDGDDGDDGNGNDGDGRNHDKT.

The protein localises to the vacuole membrane. This is an uncharacterized protein from Saccharomyces cerevisiae (strain ATCC 204508 / S288c) (Baker's yeast).